The sequence spans 214 residues: Ribosomal RNA small subunit methyltransferase G (214 aa).

S-adenosyl-L-methionine is bound by residues Gly-72, Phe-77, 125–126 (VE), and Arg-141.

This sequence belongs to the methyltransferase superfamily. RNA methyltransferase RsmG family.

It is found in the cytoplasm. It carries out the reaction guanosine(527) in 16S rRNA + S-adenosyl-L-methionine = N(7)-methylguanosine(527) in 16S rRNA + S-adenosyl-L-homocysteine. Functionally, specifically methylates the N7 position of guanine in position 527 of 16S rRNA. The polypeptide is Ribosomal RNA small subunit methyltransferase G (Sinorhizobium fredii (strain NBRC 101917 / NGR234)).